The sequence spans 149 residues: L-alanine exporter AlaE (149 aa).

The next 4 helical transmembrane spans lie at 16–36 (FAMV…LSGM), 46–66 (LVAI…RDLI), 85–105 (VLAY…TVGA), and 112–132 (AAVS…GYFL).

Belongs to the AlaE exporter family.

The protein localises to the cell inner membrane. Functionally, exports L-alanine. This Salmonella arizonae (strain ATCC BAA-731 / CDC346-86 / RSK2980) protein is L-alanine exporter AlaE.